The chain runs to 427 residues: Dihydroorotase (427 aa).

Positions 58 and 60 each coordinate Zn(2+). Residues 60-62 and Asn92 contribute to the substrate site; that span reads HYR. Zn(2+) is bound by residues Asp150, His177, and His230. Asn276 is a substrate binding site. Position 303 (Asp303) interacts with Zn(2+). Asp303 is a catalytic residue. Residues His307 and 321-322 each bind substrate; that span reads FG.

Belongs to the metallo-dependent hydrolases superfamily. DHOase family. Class I DHOase subfamily. Zn(2+) is required as a cofactor.

The enzyme catalyses (S)-dihydroorotate + H2O = N-carbamoyl-L-aspartate + H(+). It functions in the pathway pyrimidine metabolism; UMP biosynthesis via de novo pathway; (S)-dihydroorotate from bicarbonate: step 3/3. Catalyzes the reversible cyclization of carbamoyl aspartate to dihydroorotate. The protein is Dihydroorotase of Lactobacillus leichmannii.